Consider the following 402-residue polypeptide: Mannonate dehydratase 1 (402 aa).

Belongs to the mannonate dehydratase family. It depends on Fe(2+) as a cofactor. Mn(2+) serves as cofactor.

It catalyses the reaction D-mannonate = 2-dehydro-3-deoxy-D-gluconate + H2O. It functions in the pathway carbohydrate metabolism; pentose and glucuronate interconversion. Catalyzes the dehydration of D-mannonate. This chain is Mannonate dehydratase 1 (uxuA1), found in Agrobacterium fabrum (strain C58 / ATCC 33970) (Agrobacterium tumefaciens (strain C58)).